A 317-amino-acid polypeptide reads, in one-letter code: MEQEAAMVVFSCNSGSGGSSSTTDSKQEEEEEEELAAMEEDELIHVVQAAELRLPSSTTATRPSSRYKGVVPQPNGRWGAQIYERHARVWLGTFPDEEAAARAYDVAALRFRGRDAVTNRAPAAEGASAGELAFLAAHSKAEVVDMLRKHTYDDELQQGLRRGSRAQPTPRWAREPLFEKAVTPSDVGKLNRLVVPKQQAERHFPFPLRRHSSDAAGKGVLLNFEDGDGKVWRFRYSYWNSSQSYVLTKGWSRFVREKGLRPGDTVAFSRSAAAWGTEKHLLIDCKKMERNNLATVDDDARVVVKLFGVDIAGDKTR.

The interval 1–37 (MEQEAAMVVFSCNSGSGGSSSTTDSKQEEEEEEELAA) is disordered. Acidic residues predominate over residues 27–37 (QEEEEEEELAA). A DNA-binding region (AP2/ERF) is located at residues 66–121 (RYKGVVPQPNGRWGAQIYERHARVWLGTFPDEEAAARAYDVAALRFRGRDAVTNRA). The TF-B3 DNA-binding region spans 178 to 287 (FEKAVTPSDV…EKHLLIDCKK (110 aa)).

It is found in the nucleus. This Oryza sativa subsp. japonica (Rice) protein is Putative AP2/ERF and B3 domain-containing protein Os01g0140700.